Here is a 96-residue protein sequence, read N- to C-terminus: Probable quinol oxidase subunit 4 (96 aa).

Transmembrane regions (helical) follow at residues 8–28, 36–56, and 68–88; these read TVGF…TLYT, LTII…MFMH, and FKVI…YWVM.

It belongs to the cytochrome c oxidase bacterial subunit 4 family.

It is found in the cell membrane. The catalysed reaction is 2 a quinol + O2 = 2 a quinone + 2 H2O. Functionally, catalyzes quinol oxidation with the concomitant reduction of oxygen to water. This chain is Probable quinol oxidase subunit 4 (qoxD), found in Staphylococcus aureus (strain USA300).